A 1210-amino-acid polypeptide reads, in one-letter code: V-type proton ATPase 116 kDa subunit a 4 (1210 aa).

Residues 1 to 715 (MSSFSNVGFV…YTIITFPFLF (715 aa)) are Cytoplasmic-facing. Over residues 259–271 (SSKISFTSSSPSP) the composition is skewed to low complexity. Positions 259 to 292 (SSKISFTSSSPSPQRNPKNEAQKNSSSKREETSM) are disordered. Basic and acidic residues predominate over residues 275-291 (PKNEAQKNSSSKREETS). Residues 339-405 (FVKQMRRCEE…EREFLDLNNN (67 aa)) are a coiled coil. A helical membrane pass occupies residues 716-736 (AVMFGDAAHGAILLLAALFFI). The Extracellular portion of the chain corresponds to 737–760 (RNERKIESKKIRDEIFNTFYGGRY). Residues 761–781 (IMMLMGIFSIYTGFLYNDAFA) form a helical membrane-spanning segment. Topologically, residues 782-855 (KSFNVFGSGW…SFLNSMKMKA (74 aa)) are cytoplasmic. A helical transmembrane segment spans residues 856–876 (SVIIGITQMTFGVFLSVLNHI). Over 877–892 (HFKSYIDIISNFIPQV) the chain is Extracellular. Residues 893–913 (IFLSCIFIYLCIQIIVKWIFF) form a helical membrane-spanning segment. At 914–976 (SVNAENVFGF…WYPNQRLVET (63 aa)) the chain is on the cytoplasmic side. Residues 977–997 (ILISISLACIPIMLFGKPLWV) traverse the membrane as a helical segment. At 998–1127 (RFVTSKRHKL…NETIAMCLKP (130 aa)) the chain is on the extracellular side. Residues Asn1010, Asn1019, and Asn1118 are each glycosylated (N-linked (GlcNAc...) asparagine). Residues 1128 to 1148 (VVACVAFFIFASLSLSILIMM) form a helical membrane-spanning segment. Residues 1149 to 1210 (EGLSAFLHAL…DISSGQHLHI (62 aa)) lie on the Cytoplasmic side of the membrane.

It belongs to the V-ATPase 116 kDa subunit family. In terms of assembly, V-ATPase is a heteromultimeric enzyme made up of two complexes: the ATP-hydrolytic V1 complex and the proton translocation V0 complex. The V1 complex consists of three catalytic AB heterodimers that form a heterohexamer, three peripheral stalks each consisting of EG heterodimers, one central rotor including subunits D and F, and the regulatory subunits C and H. The proton translocation complex V0 consists of the proton transport subunit a, a ring of proteolipid subunits c9c'', rotary subunit d, subunits e and f, and the accessory subunits vah-19/Ac45 and vah-20/PRR. As to expression, expressed in uterus.

It is found in the membrane. Subunit of the V0 complex of vacuolar(H+)-ATPase (V-ATPase), a multisubunit enzyme composed of a peripheral complex (V1) that hydrolyzes ATP and a membrane integral complex (V0) that translocates protons. V-ATPase is responsible for acidifying and maintaining the pH of intracellular compartments and in some cell types, is targeted to the plasma membrane, where it is responsible for acidifying the extracellular environment. The chain is V-type proton ATPase 116 kDa subunit a 4 from Caenorhabditis elegans.